Here is a 384-residue protein sequence, read N- to C-terminus: Chaperone protein DnaJ (384 aa).

In terms of domain architecture, J spans 5 to 70 (DYYEVLGVSK…DKKAAYDRYG (66 aa)). Residues 16–47 (ASSDDIKKGYRRKAKELHPDRNKDDPNAEAQF) are disordered. Basic and acidic residues predominate over residues 31–47 (ELHPDRNKDDPNAEAQF). The segment at 143-221 (GLQKTINVPT…CQGAGRVEKD (79 aa)) adopts a CR-type zinc-finger fold. Residues cysteine 156, cysteine 159, cysteine 173, cysteine 176, cysteine 195, cysteine 198, cysteine 209, and cysteine 212 each contribute to the Zn(2+) site. CXXCXGXG motif repeat units lie at residues 156–163 (CKTCNGSG), 173–180 (CPTCSGMG), 195–202 (CPTCSGLG), and 209–216 (CKSCQGAG).

It belongs to the DnaJ family. As to quaternary structure, homodimer. The cofactor is Zn(2+).

It is found in the cytoplasm. Its function is as follows. Participates actively in the response to hyperosmotic and heat shock by preventing the aggregation of stress-denatured proteins and by disaggregating proteins, also in an autonomous, DnaK-independent fashion. Unfolded proteins bind initially to DnaJ; upon interaction with the DnaJ-bound protein, DnaK hydrolyzes its bound ATP, resulting in the formation of a stable complex. GrpE releases ADP from DnaK; ATP binding to DnaK triggers the release of the substrate protein, thus completing the reaction cycle. Several rounds of ATP-dependent interactions between DnaJ, DnaK and GrpE are required for fully efficient folding. Also involved, together with DnaK and GrpE, in the DNA replication of plasmids through activation of initiation proteins. In Roseobacter denitrificans (strain ATCC 33942 / OCh 114) (Erythrobacter sp. (strain OCh 114)), this protein is Chaperone protein DnaJ.